We begin with the raw amino-acid sequence, 358 residues long: Probable RNA methyltransferase MXAN_6459 (358 aa).

Residue glutamate 92 is the Proton acceptor of the active site. The 229-residue stretch at 99–327 (FDEKYVICVS…PVARRYSGGK (229 aa)) folds into the Radical SAM core domain. A disulfide bridge connects residues cysteine 106 and cysteine 333. Positions 113, 117, and 120 each coordinate [4Fe-4S] cluster. S-adenosyl-L-methionine is bound by residues 160–161 (GE), serine 192, 215–217 (SVT), and aspartate 289. Cysteine 333 serves as the catalytic S-methylcysteine intermediate.

Belongs to the radical SAM superfamily. RlmN family. Requires [4Fe-4S] cluster as cofactor.

Its subcellular location is the cytoplasm. This Myxococcus xanthus (strain DK1622) protein is Probable RNA methyltransferase MXAN_6459.